A 95-amino-acid polypeptide reads, in one-letter code: Large ribosomal subunit protein bL27 (95 aa).

A propeptide spanning residues 1–6 (MFLQLF) is cleaved from the precursor.

Belongs to the bacterial ribosomal protein bL27 family. In terms of processing, the N-terminus is cleaved by ribosomal processing cysteine protease Prp.

This is Large ribosomal subunit protein bL27 from Symbiobacterium thermophilum (strain DSM 24528 / JCM 14929 / IAM 14863 / T).